A 213-amino-acid polypeptide reads, in one-letter code: Endoplasmic reticulum vesicle protein 25 (213 aa).

Residues 1-20 (MILRIPSLLYLFTLLTAVYA) form the signal peptide. Residues 21 to 181 (VKFDLTSDRN…TNESTNQRVK (161 aa)) lie on the Lumenal side of the membrane. Residues 33-122 (PSIIWNFASA…VRSVELDVDI (90 aa)) enclose the GOLD domain. The helical transmembrane segment at 182 to 202 (VFSVLIICCTIGLGVWQLLHL) threads the bilayer. At 203 to 213 (RSFFKRKYLID) the chain is on the cytoplasmic side.

Belongs to the EMP24/GP25L family.

The protein resides in the endoplasmic reticulum membrane. Its subcellular location is the golgi apparatus membrane. In terms of biological role, constituent of COPII-coated endoplasmic reticulum-derived transport vesicles. Required for efficient transport of a subset of secretory proteins to the Golgi. Facilitates retrograde transport from the Golgi to the endoplasmic reticulum. The protein is Endoplasmic reticulum vesicle protein 25 (ERV25) of Cryptococcus neoformans var. neoformans serotype D (strain B-3501A) (Filobasidiella neoformans).